The sequence spans 301 residues: Probable alpha-L-glutamate ligase 1 (301 aa).

The 184-residue stretch at 104–287 (MQLMSRRGIG…VAGAIIAFIE (184 aa)) folds into the ATP-grasp domain. ATP-binding positions include Lys-141, 178–179 (EY), Asp-187, and 211–213 (RSN). Residues Asp-248, Glu-260, and Asn-262 each coordinate Mg(2+). Mn(2+) contacts are provided by Asp-248, Glu-260, and Asn-262.

It belongs to the RimK family. Mg(2+) serves as cofactor. The cofactor is Mn(2+).

In Shewanella amazonensis (strain ATCC BAA-1098 / SB2B), this protein is Probable alpha-L-glutamate ligase 1.